A 461-amino-acid chain; its full sequence is Steroidogenic factor 1 (461 aa).

The nuclear receptor DNA-binding region spans 10 to 85 (DELCPVCGDK…VGMRLEAVRA (76 aa)). The segment at 13–33 (CPVCGDKVSGYHYGLLTCESC) adopts an NR C4-type zinc-finger fold. Residues Lys-34, Lys-38, and Lys-72 each carry the N6-acetyllysine modification. Residues 49–73 (CTESQSCKIDKTQRKRCPFCRFQKC) form an NR C4-type zinc finger. Lys-119 is covalently cross-linked (Glycyl lysine isopeptide (Lys-Gly) (interchain with G-Cter in SUMO)). The tract at residues 119–157 (KLETGPPMGVPPPPPPAPDYVLPPSLHGPEPKGLAAGPP) is disordered. The span at 126 to 136 (MGVPPPPPPAP) shows a compositional bias: pro residues. Lys-194 is covalently cross-linked (Glycyl lysine isopeptide (Lys-Gly) (interchain with G-Cter in SUMO)). Ser-203 bears the Phosphoserine; by CDK7 mark. Residues 222–459 (NVPELILQLL…NLLIEMLQAK (238 aa)) enclose the NR LBD domain. The important for dimerization stretch occupies residues 230-461 (LLQLEPDEDQ…LIEMLQAKQT (232 aa)). A 1,2-diacyl-sn-glycero-3-phosphocholine is bound by residues Gly-341, Tyr-436, and Lys-440. The a 1,2-diacylglycero-3-phosphoethanolamine site is built by Gly-341, Tyr-436, and Lys-440.

The protein belongs to the nuclear hormone receptor family. NR5 subfamily. As to quaternary structure, binds DNA as a monomer. Interacts with NR0B2 and PPARGC1A. Part of a complex consisting of SFPQ, NONO and NR5A1. Interacts with NCOA2. Interacts with DGKQ and CDK7. Binds to and activated by HIPK3. Post-translationally, acetylation stimulates the transcriptional activity. Sumoylation reduces CDK7-mediated phosphorylation on Ser-203. In terms of processing, phosphorylated on Ser-203 by CDK7. This phosphorylation promotes transcriptional activity. In terms of tissue distribution, high expressed in the adrenal cortex, the ovary, the testis, and the spleen.

It is found in the nucleus. In terms of biological role, transcriptional activator. Essential for sexual differentiation and formation of the primary steroidogenic tissues. Binds to the Ad4 site found in the promoter region of steroidogenic P450 genes such as CYP11A, CYP11B and CYP21B. Also regulates the AMH/Muellerian inhibiting substance gene as well as the AHCH and STAR genes. 5'-YCAAGGYC-3' and 5'-RRAGGTCA-3' are the consensus sequences for the recognition by NR5A1. The SFPQ-NONO-NR5A1 complex binds to the CYP17 promoter and regulates basal and cAMP-dependent transcriptional activity. Binds phosphatidylcholine. Binds phospholipids with a phosphatidylinositol (PI) headgroup, in particular PI(3,4)P2 and PI(3,4,5)P3. Activated by the phosphorylation of NR5A1 by HIPK3 leading to increased steroidogenic gene expression upon cAMP signaling pathway stimulation. The polypeptide is Steroidogenic factor 1 (NR5A1) (Homo sapiens (Human)).